The chain runs to 397 residues: Major outer membrane porin, serovar H (397 aa).

Residues 1–22 (MKKLLKSVLVFAALSSASSLQA) form the signal peptide.

It belongs to the chlamydial porin (CP) (TC 1.B.2) family. In terms of assembly, part of a disulfide cross-linked outer membrane complex (COMC) composed of the major outer membrane porin (MOMP), the small cysteine-rich protein (OmcA) and the large cysteine-rich periplasmic protein (OmcB).

The protein localises to the cell outer membrane. Its function is as follows. In elementary bodies (EBs, the infectious stage, which is able to survive outside the host cell) provides the structural integrity of the outer envelope through disulfide cross-links with the small cysteine-rich protein and the large cysteine-rich periplasmic protein. It has been described in publications as the Sarkosyl-insoluble COMC (Chlamydia outer membrane complex), and serves as the functional equivalent of peptidoglycan. In terms of biological role, permits diffusion of specific solutes through the outer membrane. This chain is Major outer membrane porin, serovar H (ompA), found in Chlamydia trachomatis.